Here is a 686-residue protein sequence, read N- to C-terminus: Translation initiation factor IF-2 (686 aa).

Residues 61 to 98 (FEVEEKVVRSKKNSNKKKKKGKGNEDKRQENFAGRQQT) are disordered. Over residues 69–81 (RSKKNSNKKKKKG) the composition is skewed to basic residues. The 170-residue stretch at 188–357 (ERPAVVTIMG…LLVSEVEEYK (170 aa)) folds into the tr-type G domain. Positions 197-204 (GHVDHGKT) are G1. Residue 197-204 (GHVDHGKT) participates in GTP binding. Residues 222-226 (GITQH) form a G2 region. The segment at 243 to 246 (DTPG) is G3. GTP contacts are provided by residues 243-247 (DTPGH) and 297-300 (NKMD). A G4 region spans residues 297–300 (NKMD). The segment at 333–335 (SAI) is G5.

This sequence belongs to the TRAFAC class translation factor GTPase superfamily. Classic translation factor GTPase family. IF-2 subfamily.

Its subcellular location is the cytoplasm. One of the essential components for the initiation of protein synthesis. Protects formylmethionyl-tRNA from spontaneous hydrolysis and promotes its binding to the 30S ribosomal subunits. Also involved in the hydrolysis of GTP during the formation of the 70S ribosomal complex. This is Translation initiation factor IF-2 from Bacillus cereus (strain B4264).